The chain runs to 47 residues: Delta-actitoxin-Ael1b (47 aa).

3 cysteine pairs are disulfide-bonded: C4–C44, C6–C34, and C27–C45.

This sequence belongs to the sea anemone sodium channel inhibitory toxin family. Type I subfamily.

It is found in the secreted. The protein localises to the nematocyst. Produces a positive inotropic effect in mammalian heart muscle. Modifies current passing through the fast sodium channel (Nav) in neuroblastoma cells, leading to delayed and incomplete inactivation. Paralyzes the shore crab (C.maenas) by tetanic contractions after intramuscular injection. The sequence is that of Delta-actitoxin-Ael1b from Anthopleura elegantissima (Green aggregating anemone).